The sequence spans 423 residues: NDP-N-acetyl-D-galactosaminuronic acid dehydrogenase (423 aa).

11–28 (TISVVGLGYIGLPTATVL) contributes to the NAD(+) binding site. Lys-218 functions as the Proton donor/acceptor in the catalytic mechanism. Cys-272 (nucleophile) is an active-site residue.

This sequence belongs to the UDP-glucose/GDP-mannose dehydrogenase family.

In terms of biological role, probably involved in synthesis of sugar components of EPS I, by converting NDP-N-acetyl-D-galactosamine into NDP-N-acetyl-D-galactosaminuronic acid. This chain is NDP-N-acetyl-D-galactosaminuronic acid dehydrogenase (epsD), found in Ralstonia solanacearum (Pseudomonas solanacearum).